Here is a 471-residue protein sequence, read N- to C-terminus: Argininosuccinate lyase (471 aa).

It belongs to the lyase 1 family. Argininosuccinate lyase subfamily.

Its subcellular location is the cytoplasm. It catalyses the reaction 2-(N(omega)-L-arginino)succinate = fumarate + L-arginine. The protein operates within amino-acid biosynthesis; L-arginine biosynthesis; L-arginine from L-ornithine and carbamoyl phosphate: step 3/3. This is Argininosuccinate lyase from Deinococcus radiodurans (strain ATCC 13939 / DSM 20539 / JCM 16871 / CCUG 27074 / LMG 4051 / NBRC 15346 / NCIMB 9279 / VKM B-1422 / R1).